Consider the following 114-residue polypeptide: Putative cysteine proteinase inhibitor 9 (114 aa).

A signal peptide spans 1–23 (MRTSSLVLFAAVAVFGAACTAAA).

This sequence belongs to the cystatin family. Phytocystatin subfamily.

The protein resides in the secreted. Its function is as follows. Specific inhibitor of cysteine proteinases. Probably involved in the regulation of endogenous processes and in defense against pests and pathogens. In Oryza sativa subsp. japonica (Rice), this protein is Putative cysteine proteinase inhibitor 9.